Reading from the N-terminus, the 622-residue chain is Membrane protein insertase YidC (622 aa).

Residues 6 to 26 (IVLLIIFSTSLLFLWDAWVKE) form a helical membrane-spanning segment. The interval 47 to 87 (TQSKNNDGLPIPGSELTASQTGSDLNGIPSSGDTADSVTPR) is disordered. Residues 62-83 (LTASQTGSDLNGIPSSGDTADS) show a composition bias toward polar residues. 3 consecutive transmembrane segments (helical) span residues 381–401 (WGIA…PLSA), 451–471 (FPIL…LAAV), and 525–545 (PVAF…YSLV). The segment at 563-622 (TAPSQDAPESPASKDAPELPVSNQVINDSENTEAPASGPADSPKKPVNIPRRMHKRTRKK) is disordered. Positions 583-596 (VSNQVINDSENTEA) are enriched in polar residues. Residues 613 to 622 (RRMHKRTRKK) are compositionally biased toward basic residues.

It belongs to the OXA1/ALB3/YidC family. Type 1 subfamily. In terms of assembly, interacts with the Sec translocase complex via SecD. Specifically interacts with transmembrane segments of nascent integral membrane proteins during membrane integration.

The protein localises to the cell inner membrane. Required for the insertion and/or proper folding and/or complex formation of integral membrane proteins into the membrane. Involved in integration of membrane proteins that insert both dependently and independently of the Sec translocase complex, as well as at least some lipoproteins. Aids folding of multispanning membrane proteins. This chain is Membrane protein insertase YidC, found in Nitrosomonas eutropha (strain DSM 101675 / C91 / Nm57).